Here is a 633-residue protein sequence, read N- to C-terminus: Bifunctional enzyme CysN/CysC (633 aa).

Residues 1-463 form a sulfate adenylyltransferase region; sequence MSHQSDLISE…REERAGRFGQ (463 aa). The tr-type G domain maps to 22-241; it reads KELLRFLTCG…TVEIAADRNL (220 aa). The tract at residues 31–38 is G1; it reads GNVDDGKS. Position 31-38 (31-38) interacts with GTP; the sequence is GNVDDGKS. The tract at residues 89 to 93 is G2; that stretch reads GITID. The tract at residues 110–113 is G3; sequence DTPG. GTP-binding positions include 110–114 and 165–168; these read DTPGH and NKMD. Residues 165 to 168 are G4; that stretch reads NKMD. A G5 region spans residues 204-206; that stretch reads SAL. An adenylyl-sulfate kinase region spans residues 464-633; the sequence is QPATVLFSGL…LDLLRERQAI (170 aa). 472–479 provides a ligand contact to ATP; the sequence is GLSGAGKS.

This sequence in the C-terminal section; belongs to the APS kinase family. It in the N-terminal section; belongs to the TRAFAC class translation factor GTPase superfamily. Classic translation factor GTPase family. CysN/NodQ subfamily. In terms of assembly, heterodimer composed of CysD, the smaller subunit, and CysNC.

It carries out the reaction sulfate + ATP + H(+) = adenosine 5'-phosphosulfate + diphosphate. The catalysed reaction is adenosine 5'-phosphosulfate + ATP = 3'-phosphoadenylyl sulfate + ADP + H(+). The protein operates within sulfur metabolism; hydrogen sulfide biosynthesis; sulfite from sulfate: step 1/3. Its pathway is sulfur metabolism; hydrogen sulfide biosynthesis; sulfite from sulfate: step 2/3. With CysD forms the ATP sulfurylase (ATPS) that catalyzes the adenylation of sulfate producing adenosine 5'-phosphosulfate (APS) and diphosphate, the first enzymatic step in sulfur assimilation pathway. APS synthesis involves the formation of a high-energy phosphoric-sulfuric acid anhydride bond driven by GTP hydrolysis by CysN coupled to ATP hydrolysis by CysD. In terms of biological role, APS kinase catalyzes the synthesis of activated sulfate. This is Bifunctional enzyme CysN/CysC (cysNC) from Pseudomonas aeruginosa (strain ATCC 15692 / DSM 22644 / CIP 104116 / JCM 14847 / LMG 12228 / 1C / PRS 101 / PAO1).